Here is a 575-residue protein sequence, read N- to C-terminus: Chaperonin CPN60-2, mitochondrial (575 aa).

A mitochondrion-targeting transit peptide spans M1–Y32.

The protein belongs to the chaperonin (HSP60) family.

The protein localises to the mitochondrion. Implicated in mitochondrial protein import and macromolecular assembly. May facilitate the correct folding of imported proteins. May also prevent misfolding and promote the refolding and proper assembly of unfolded polypeptides generated under stress conditions in the mitochondrial matrix. In Cucurbita maxima (Pumpkin), this protein is Chaperonin CPN60-2, mitochondrial (CPN60-2).